A 433-amino-acid chain; its full sequence is Divergent protein kinase domain 2B (433 aa).

An N-terminal signal peptide occupies residues 1 to 31 (MEPQLGPEAAALRPGWLALLLWVSALSCSFS). N-linked (GlcNAc...) asparagine glycosylation is present at Asn100.

The protein belongs to the DIPK family.

The protein localises to the secreted. The sequence is that of Divergent protein kinase domain 2B from Homo sapiens (Human).